Consider the following 361-residue polypeptide: RNA 3'-terminal phosphate cyclase (361 aa).

Residues Q109 and H293–Q297 each bind ATP. H319 serves as the catalytic Tele-AMP-histidine intermediate.

This sequence belongs to the RNA 3'-terminal cyclase family. Type 1 subfamily.

The protein localises to the cytoplasm. The enzyme catalyses a 3'-end 3'-phospho-ribonucleotide-RNA + ATP = a 3'-end 2',3'-cyclophospho-ribonucleotide-RNA + AMP + diphosphate. Its function is as follows. Catalyzes the conversion of 3'-phosphate to a 2',3'-cyclic phosphodiester at the end of RNA. The mechanism of action of the enzyme occurs in 3 steps: (A) adenylation of the enzyme by ATP; (B) transfer of adenylate to an RNA-N3'P to produce RNA-N3'PP5'A; (C) and attack of the adjacent 2'-hydroxyl on the 3'-phosphorus in the diester linkage to produce the cyclic end product. The biological role of this enzyme is unknown but it is likely to function in some aspects of cellular RNA processing. The chain is RNA 3'-terminal phosphate cyclase from Methylococcus capsulatus (strain ATCC 33009 / NCIMB 11132 / Bath).